The following is a 123-amino-acid chain: Large ribosomal subunit protein uL14 (123 aa).

It belongs to the universal ribosomal protein uL14 family. Part of the 50S ribosomal subunit. Forms a cluster with proteins L3 and L19. In the 70S ribosome, L14 and L19 interact and together make contacts with the 16S rRNA in bridges B5 and B8.

Functionally, binds to 23S rRNA. Forms part of two intersubunit bridges in the 70S ribosome. This Escherichia coli O6:K15:H31 (strain 536 / UPEC) protein is Large ribosomal subunit protein uL14.